The sequence spans 246 residues: Biosynthetic peptidoglycan transglycosylase (246 aa).

The helical transmembrane segment at 20 to 42 threads the bilayer; that stretch reads WLRWLMAAPLLFAAASVLQVLIL.

Belongs to the glycosyltransferase 51 family.

The protein resides in the cell inner membrane. The catalysed reaction is [GlcNAc-(1-&gt;4)-Mur2Ac(oyl-L-Ala-gamma-D-Glu-L-Lys-D-Ala-D-Ala)](n)-di-trans,octa-cis-undecaprenyl diphosphate + beta-D-GlcNAc-(1-&gt;4)-Mur2Ac(oyl-L-Ala-gamma-D-Glu-L-Lys-D-Ala-D-Ala)-di-trans,octa-cis-undecaprenyl diphosphate = [GlcNAc-(1-&gt;4)-Mur2Ac(oyl-L-Ala-gamma-D-Glu-L-Lys-D-Ala-D-Ala)](n+1)-di-trans,octa-cis-undecaprenyl diphosphate + di-trans,octa-cis-undecaprenyl diphosphate + H(+). It participates in cell wall biogenesis; peptidoglycan biosynthesis. In terms of biological role, peptidoglycan polymerase that catalyzes glycan chain elongation from lipid-linked precursors. In Xanthomonas axonopodis pv. citri (strain 306), this protein is Biosynthetic peptidoglycan transglycosylase.